A 292-amino-acid polypeptide reads, in one-letter code: Glutamyl-Q tRNA(Asp) synthetase (292 aa).

L-glutamate is bound by residues 11–15 (RFAPS) and Glu47. The short motif at 14 to 24 (PSPTGPLHFGS) is the 'HIGH' region element. Cys103, Cys105, Tyr116, and Cys120 together coordinate Zn(2+). L-glutamate contacts are provided by Tyr173 and Arg191. The 'KMSKS' region signature appears at 229–233 (KLSKQ). Lys232 contacts ATP.

This sequence belongs to the class-I aminoacyl-tRNA synthetase family. GluQ subfamily. Zn(2+) serves as cofactor.

In terms of biological role, catalyzes the tRNA-independent activation of glutamate in presence of ATP and the subsequent transfer of glutamate onto a tRNA(Asp). Glutamate is transferred on the 2-amino-5-(4,5-dihydroxy-2-cyclopenten-1-yl) moiety of the queuosine in the wobble position of the QUC anticodon. The sequence is that of Glutamyl-Q tRNA(Asp) synthetase from Acinetobacter baylyi (strain ATCC 33305 / BD413 / ADP1).